The primary structure comprises 641 residues: Putative ABC transporter ATP-binding protein MA_0870 (641 aa).

Residues 10–250 (IEIKDLWYTY…IEVFHRLGLR (241 aa)) enclose the ABC transporter 1 domain. 44 to 51 (GPTGCGKS) is a binding site for ATP. The interval 286 to 332 (VKTPRNFSNPEEETGRRTDPAERNEFVNTGSGNIKYGDNRSENKGSE) is disordered. Basic and acidic residues-rich tracts occupy residues 298 to 310 (ETGR…ERNE) and 322 to 332 (GDNRSENKGSE). An ABC transporter 2 domain is found at 338 to 566 (ISIRDLWSGY…IEILKQASLT (229 aa)). 371–378 (GTNGSGKS) provides a ligand contact to ATP.

This sequence belongs to the ABC transporter superfamily.

It localises to the cell membrane. Its function is as follows. Probably part of an ABC transporter complex. Responsible for energy coupling to the transport system. The sequence is that of Putative ABC transporter ATP-binding protein MA_0870 from Methanosarcina acetivorans (strain ATCC 35395 / DSM 2834 / JCM 12185 / C2A).